The chain runs to 208 residues: Anthranilate synthase component 2 (208 aa).

The Glutamine amidotransferase type-1 domain maps to 3–208 (HVVLIDNHDS…SRCVEQLLAN (206 aa)). 53–55 (GPG) contacts L-glutamine. Residue Cys80 is the Nucleophile; for GATase activity of the active site. Residues Gln84 and 145–146 (SL) contribute to the L-glutamine site. Active-site for GATase activity residues include His185 and Glu187.

As to quaternary structure, heterotetramer consisting of two non-identical subunits: a beta subunit (TrpG) and a large alpha subunit (TrpE).

The catalysed reaction is chorismate + L-glutamine = anthranilate + pyruvate + L-glutamate + H(+). It functions in the pathway amino-acid biosynthesis; L-tryptophan biosynthesis; L-tryptophan from chorismate: step 1/5. Part of a heterotetrameric complex that catalyzes the two-step biosynthesis of anthranilate, an intermediate in the biosynthesis of L-tryptophan. In the first step, the glutamine-binding beta subunit (TrpG) of anthranilate synthase (AS) provides the glutamine amidotransferase activity which generates ammonia as a substrate that, along with chorismate, is used in the second step, catalyzed by the large alpha subunit of AS (TrpE) to produce anthranilate. In the absence of TrpG, TrpE can synthesize anthranilate directly from chorismate and high concentrations of ammonia. The polypeptide is Anthranilate synthase component 2 (trpG) (Corynebacterium glutamicum (strain ATCC 13032 / DSM 20300 / JCM 1318 / BCRC 11384 / CCUG 27702 / LMG 3730 / NBRC 12168 / NCIMB 10025 / NRRL B-2784 / 534)).